The chain runs to 510 residues: NAD(P)H-quinone oxidoreductase subunit 2, chloroplastic (510 aa).

A run of 12 helical transmembrane segments spans residues 24-44, 59-79, 99-119, 124-144, 149-169, 184-204, 229-249, 295-315, 323-343, 354-374, 395-415, and 418-438; these read LLLF…GLIL, WFYF…FFRW, IFQF…VEYI, MAIT…MFLC, LITI…LSGY, LLMG…LYGL, ISIA…PAPF, WHLL…LIAL, MLAY…IVGD, YMLF…SFGL, ALSS…AGFF, and LYLF…IGLL.

Belongs to the complex I subunit 2 family. NDH is composed of at least 16 different subunits, 5 of which are encoded in the nucleus.

Its subcellular location is the plastid. It is found in the chloroplast thylakoid membrane. The catalysed reaction is a plastoquinone + NADH + (n+1) H(+)(in) = a plastoquinol + NAD(+) + n H(+)(out). The enzyme catalyses a plastoquinone + NADPH + (n+1) H(+)(in) = a plastoquinol + NADP(+) + n H(+)(out). Its function is as follows. NDH shuttles electrons from NAD(P)H:plastoquinone, via FMN and iron-sulfur (Fe-S) centers, to quinones in the photosynthetic chain and possibly in a chloroplast respiratory chain. The immediate electron acceptor for the enzyme in this species is believed to be plastoquinone. Couples the redox reaction to proton translocation, and thus conserves the redox energy in a proton gradient. This is NAD(P)H-quinone oxidoreductase subunit 2, chloroplastic from Coelogyne cristata (Orchid).